The sequence spans 89 residues: Small ribosomal subunit protein uS15 (89 aa).

It belongs to the universal ribosomal protein uS15 family. As to quaternary structure, part of the 30S ribosomal subunit. Forms a bridge to the 50S subunit in the 70S ribosome, contacting the 23S rRNA.

Functionally, one of the primary rRNA binding proteins, it binds directly to 16S rRNA where it helps nucleate assembly of the platform of the 30S subunit by binding and bridging several RNA helices of the 16S rRNA. In terms of biological role, forms an intersubunit bridge (bridge B4) with the 23S rRNA of the 50S subunit in the ribosome. This Desulfatibacillum aliphaticivorans protein is Small ribosomal subunit protein uS15.